The following is a 163-amino-acid chain: 2-C-methyl-D-erythritol 2,4-cyclodiphosphate synthase (163 aa).

A divalent metal cation-binding residues include D10 and H12. Residues 10-12 (DVH) and 36-37 (HS) contribute to the 4-CDP-2-C-methyl-D-erythritol 2-phosphate site. H44 lines the a divalent metal cation pocket. 4-CDP-2-C-methyl-D-erythritol 2-phosphate-binding positions include 58 to 60 (DIG), 63 to 67 (FPDND), 134 to 137 (TTTE), F141, and R144.

The protein belongs to the IspF family. As to quaternary structure, homotrimer. Requires a divalent metal cation as cofactor.

The catalysed reaction is 4-CDP-2-C-methyl-D-erythritol 2-phosphate = 2-C-methyl-D-erythritol 2,4-cyclic diphosphate + CMP. The protein operates within isoprenoid biosynthesis; isopentenyl diphosphate biosynthesis via DXP pathway; isopentenyl diphosphate from 1-deoxy-D-xylulose 5-phosphate: step 4/6. In terms of biological role, involved in the biosynthesis of isopentenyl diphosphate (IPP) and dimethylallyl diphosphate (DMAPP), two major building blocks of isoprenoid compounds. Catalyzes the conversion of 4-diphosphocytidyl-2-C-methyl-D-erythritol 2-phosphate (CDP-ME2P) to 2-C-methyl-D-erythritol 2,4-cyclodiphosphate (ME-CPP) with a corresponding release of cytidine 5-monophosphate (CMP). This chain is 2-C-methyl-D-erythritol 2,4-cyclodiphosphate synthase, found in Carboxydothermus hydrogenoformans (strain ATCC BAA-161 / DSM 6008 / Z-2901).